The chain runs to 89 residues: MSLSVEKKAAIVAEFGRDAKDTGSSEVQIALLTAQINHLQAHFAEHKKDHHGRRGLLRMVSRRRKLLDYLKRTDLAKYSETIARLGLRR.

This sequence belongs to the universal ribosomal protein uS15 family. In terms of assembly, part of the 30S ribosomal subunit. Forms a bridge to the 50S subunit in the 70S ribosome, contacting the 23S rRNA.

One of the primary rRNA binding proteins, it binds directly to 16S rRNA where it helps nucleate assembly of the platform of the 30S subunit by binding and bridging several RNA helices of the 16S rRNA. In terms of biological role, forms an intersubunit bridge (bridge B4) with the 23S rRNA of the 50S subunit in the ribosome. This chain is Small ribosomal subunit protein uS15, found in Mannheimia succiniciproducens (strain KCTC 0769BP / MBEL55E).